The chain runs to 246 residues: 3-deoxy-manno-octulosonate cytidylyltransferase (246 aa).

This sequence belongs to the KdsB family.

It is found in the cytoplasm. It carries out the reaction 3-deoxy-alpha-D-manno-oct-2-ulosonate + CTP = CMP-3-deoxy-beta-D-manno-octulosonate + diphosphate. The protein operates within nucleotide-sugar biosynthesis; CMP-3-deoxy-D-manno-octulosonate biosynthesis; CMP-3-deoxy-D-manno-octulosonate from 3-deoxy-D-manno-octulosonate and CTP: step 1/1. It functions in the pathway bacterial outer membrane biogenesis; lipopolysaccharide biosynthesis. Functionally, activates KDO (a required 8-carbon sugar) for incorporation into bacterial lipopolysaccharide in Gram-negative bacteria. This Paramagnetospirillum magneticum (strain ATCC 700264 / AMB-1) (Magnetospirillum magneticum) protein is 3-deoxy-manno-octulosonate cytidylyltransferase.